Reading from the N-terminus, the 268-residue chain is Tryptophan synthase alpha chain (268 aa).

Active-site proton acceptor residues include E49 and D60.

It belongs to the TrpA family. In terms of assembly, tetramer of two alpha and two beta chains.

It catalyses the reaction (1S,2R)-1-C-(indol-3-yl)glycerol 3-phosphate + L-serine = D-glyceraldehyde 3-phosphate + L-tryptophan + H2O. It participates in amino-acid biosynthesis; L-tryptophan biosynthesis; L-tryptophan from chorismate: step 5/5. The alpha subunit is responsible for the aldol cleavage of indoleglycerol phosphate to indole and glyceraldehyde 3-phosphate. This is Tryptophan synthase alpha chain from Shigella boydii serotype 18 (strain CDC 3083-94 / BS512).